A 181-amino-acid polypeptide reads, in one-letter code: Oligoribonuclease (181 aa).

The Exonuclease domain occupies 8 to 171 (LIWVDLEMTG…DDIRESIAEL (164 aa)). Residue Tyr-129 is part of the active site.

It belongs to the oligoribonuclease family.

It localises to the cytoplasm. Its function is as follows. 3'-to-5' exoribonuclease specific for small oligoribonucleotides. This is Oligoribonuclease from Vibrio campbellii (strain ATCC BAA-1116).